Here is a 436-residue protein sequence, read N- to C-terminus: GTPase Der (436 aa).

EngA-type G domains follow at residues Pro4–Leu167 and Ile175–Asn351. GTP is bound by residues Gly10–Ser17, Asp57–Ile61, Asn119–Asp122, Gly181–Ser188, Asp229–Ile233, and Asn294–Asp297. The 85-residue stretch at Arg352 to Lys436 folds into the KH-like domain.

The protein belongs to the TRAFAC class TrmE-Era-EngA-EngB-Septin-like GTPase superfamily. EngA (Der) GTPase family. Associates with the 50S ribosomal subunit.

Its function is as follows. GTPase that plays an essential role in the late steps of ribosome biogenesis. This chain is GTPase Der, found in Latilactobacillus sakei subsp. sakei (strain 23K) (Lactobacillus sakei subsp. sakei).